Here is a 92-residue protein sequence, read N- to C-terminus: UPF0250 protein XF_1271 (92 aa).

It belongs to the UPF0250 family.

The chain is UPF0250 protein XF_1271 from Xylella fastidiosa (strain 9a5c).